The following is a 239-amino-acid chain: Large ribosomal subunit protein uL2 (239 aa).

Disordered regions lie at residues 1 to 21 (MGKS…KSPS) and 203 to 239 (PFGG…GRRK). Basic residues predominate over residues 222–239 (PPGRKVGHIAARRTGRRK).

The protein belongs to the universal ribosomal protein uL2 family. In terms of assembly, part of the 50S ribosomal subunit. Forms a bridge to the 30S subunit in the 70S ribosome.

Functionally, one of the primary rRNA binding proteins. Required for association of the 30S and 50S subunits to form the 70S ribosome, for tRNA binding and peptide bond formation. It has been suggested to have peptidyltransferase activity; this is somewhat controversial. Makes several contacts with the 16S rRNA in the 70S ribosome. The chain is Large ribosomal subunit protein uL2 from Pyrococcus furiosus (strain ATCC 43587 / DSM 3638 / JCM 8422 / Vc1).